Consider the following 307-residue polypeptide: Probable GTP 3',8-cyclase (307 aa).

The 219-residue stretch at 4–222 folds into the Radical SAM core domain; the sequence is ALGREVRSVR…RTFHSREVYR (219 aa). Arg13 contributes to the GTP binding site. 2 residues coordinate [4Fe-4S] cluster: Cys20 and Cys24. Tyr26 provides a ligand contact to S-adenosyl-L-methionine. Residue Cys27 coordinates [4Fe-4S] cluster. Lys60 is a GTP binding site. Positions 64 and 112 each coordinate S-adenosyl-L-methionine. Lys150 contacts GTP. Residues Cys240 and Cys243 each coordinate [4Fe-4S] cluster. 245–247 is a GTP binding site; sequence RIR. Cys257 provides a ligand contact to [4Fe-4S] cluster.

It belongs to the radical SAM superfamily. MoaA family. It depends on [4Fe-4S] cluster as a cofactor.

The enzyme catalyses GTP + AH2 + S-adenosyl-L-methionine = (8S)-3',8-cyclo-7,8-dihydroguanosine 5'-triphosphate + 5'-deoxyadenosine + L-methionine + A + H(+). It participates in cofactor biosynthesis; molybdopterin biosynthesis. Catalyzes the cyclization of GTP to (8S)-3',8-cyclo-7,8-dihydroguanosine 5'-triphosphate. This Methanopyrus kandleri (strain AV19 / DSM 6324 / JCM 9639 / NBRC 100938) protein is Probable GTP 3',8-cyclase.